The sequence spans 744 residues: Putative pre-mRNA-splicing factor ATP-dependent RNA helicase DHX32 (744 aa).

At Met-1 the chain carries N-acetylmethionine. The interval 1 to 28 (MDEEELDHPNASPEKRYFPESLDSSDGD) is disordered. The Helicase ATP-binding domain occupies 72–270 (MESLLQNQVV…RLIFEIHRSG (199 aa)). 85 to 92 (GDSKCGKS) lines the ATP pocket. Residues 185-188 (DDVH) carry the DEAH box motif. One can recognise a Helicase C-terminal domain in the interval 258–438 (SVIRLIFEIH…SMVLFMKRVD (181 aa)).

Belongs to the DEAD box helicase family. DEAH subfamily.

The protein localises to the nucleus. It is found in the mitochondrion. The enzyme catalyses ATP + H2O = ADP + phosphate + H(+). This chain is Putative pre-mRNA-splicing factor ATP-dependent RNA helicase DHX32 (Dhx32), found in Mus musculus (Mouse).